Consider the following 1092-residue polypeptide: MTNTKYYPEVSSNADFAGLEREILKFWQDNNIFQKSIDDRNGESEFIFYDGPPFANGLPHYGHLLTGFIKDVYARYQTVKGKKVERRFGWDCHGLPAEMQSEKELGISGRLAIANFGIEKFNAHCRASVMKYANDWEEYVTRQARWVDFKNSYKTMDKNFMESVLWAFKELYNKGLLYESMRVMPYSWACETPLSNFETRLDNSYRERADKAVTVSFVLSHPVATTTGSFKEYRILAWTTTPWTLPSNLALAVGSDIDYALVPKNDVCYIIAAYSVSKYAKELGLSGEENFEIIKGSELQGLHYKSLFDYFENHPNSFKIFAGDFVVEGDGTGVVHMAPGFGEDDQILCESKGIELVCPVDNSGKFTKEIPNLEGLQVFDANDKIIIKLKEQGNWLKTEQYIHNYPHCWRTDTPLIYKAVPSWYVKVTQFKDRMVELNQQINWIPFHVKDNLFGKWLENARDWSISRNRFWGTPLPVWKSDDPKYPRIDVYGSIEELEKDFGVKVTDLHRPFIDELTRPNPDDPTGKSTMRRIEDVFDCWFESGSMPYGQAHYPFENKEWFEDHFPADFIVEYSAQTRGWFYTLMVLSTALFDRPPFLNCICHGVILDSTGQKLSKRLNNYADPLELFDKYGSDALRVTMLSSNVVKGQELLIDKDGKMVFDTLRLFIKPIWNAYHFFTMYANADSLKGKLNFSSKNVLDVYILSKLKIAVQKIEESLDNFDTQTAYHAVSEFFEVLNNWYIRRSRARFWKSEKDTDKQNAYNTLYSCLDTMAIAMSALVPMISEAIYKGLRHCEERNDTALSGKSNVIARQDTSLDKAISGVSHKIATALSVPRNDAISVHLCNYPTLSDFEINHELVATMDNVLDICSNSLFIRSTENIRVRQPLASIAIISKHNNNLKDFEDLIKDEINVKAVIYRDDLENYTSKKLSINFPMLGKRLPHKMKEIIVASKKGEWEAITGGLAICGETLNSDEYKLVLEPYSHIKGAASFENNSSLLILDLELTPELIEEGYARDIVRFIQQARKDADFSITDRILIEIISEFNLSKIIDNYGDFIKEQTLGEFAKNFTPDYVSKVELENYQIQLKVKKS.

The short motif at Pro-53–His-63 is the 'HIGH' region element. The 'KMSKS' region motif lies at Lys-613–Arg-617. Lys-616 lines the ATP pocket.

This sequence belongs to the class-I aminoacyl-tRNA synthetase family. IleS type 2 subfamily. In terms of assembly, monomer. Requires Zn(2+) as cofactor.

It is found in the cytoplasm. The enzyme catalyses tRNA(Ile) + L-isoleucine + ATP = L-isoleucyl-tRNA(Ile) + AMP + diphosphate. In terms of biological role, catalyzes the attachment of isoleucine to tRNA(Ile). As IleRS can inadvertently accommodate and process structurally similar amino acids such as valine, to avoid such errors it has two additional distinct tRNA(Ile)-dependent editing activities. One activity is designated as 'pretransfer' editing and involves the hydrolysis of activated Val-AMP. The other activity is designated 'posttransfer' editing and involves deacylation of mischarged Val-tRNA(Ile). In Rickettsia peacockii (strain Rustic), this protein is Isoleucine--tRNA ligase.